The following is a 395-amino-acid chain: Tyrosine--tRNA ligase (395 aa).

The short motif at 42–51 (PTAPDIHLGH) is the 'HIGH' region element. The 'KMSKS' region motif lies at 226 to 230 (KMSKS). Position 229 (Lys-229) interacts with ATP. Residues 334-394 (IAISNLLKDA…GKRKFARITL (61 aa)) enclose the S4 RNA-binding domain.

It belongs to the class-I aminoacyl-tRNA synthetase family. TyrS type 2 subfamily. Homodimer.

The protein resides in the cytoplasm. It catalyses the reaction tRNA(Tyr) + L-tyrosine + ATP = L-tyrosyl-tRNA(Tyr) + AMP + diphosphate + H(+). Catalyzes the attachment of tyrosine to tRNA(Tyr) in a two-step reaction: tyrosine is first activated by ATP to form Tyr-AMP and then transferred to the acceptor end of tRNA(Tyr). This Photobacterium profundum (strain SS9) protein is Tyrosine--tRNA ligase.